We begin with the raw amino-acid sequence, 338 residues long: Phosphate acyltransferase (338 aa).

Belongs to the PlsX family. As to quaternary structure, homodimer. Probably interacts with PlsY.

The protein resides in the cytoplasm. The catalysed reaction is a fatty acyl-[ACP] + phosphate = an acyl phosphate + holo-[ACP]. It participates in lipid metabolism; phospholipid metabolism. Functionally, catalyzes the reversible formation of acyl-phosphate (acyl-PO(4)) from acyl-[acyl-carrier-protein] (acyl-ACP). This enzyme utilizes acyl-ACP as fatty acyl donor, but not acyl-CoA. The chain is Phosphate acyltransferase from Mannheimia succiniciproducens (strain KCTC 0769BP / MBEL55E).